The sequence spans 503 residues: Intracellular exo-alpha-(1-&gt;5)-L-arabinofuranosidase (503 aa).

Residues Glu-27, Asn-72, and Asn-172 each coordinate alpha-L-arabinofuranose. Glu-173 functions as the Proton donor/acceptor in the catalytic mechanism. Residues Tyr-244, Glu-292, and Gln-352 each contribute to the alpha-L-arabinofuranose site. The active-site Nucleophile is the Glu-292.

It belongs to the glycosyl hydrolase 51 family. As to quaternary structure, homohexamer; trimer of dimers.

The protein resides in the cytoplasm. It carries out the reaction Hydrolysis of terminal non-reducing alpha-L-arabinofuranoside residues in alpha-L-arabinosides.. Its pathway is glycan metabolism; L-arabinan degradation. Its function is as follows. Involved in the degradation of arabinan and is a key enzyme in the complete degradation of the plant cell wall. Catalyzes the cleavage of terminal alpha-(1-&gt;5)-arabinofuranosyl bonds in small oligosaccharides as alpha-(1-&gt;5)-linked arabinobiose/arabinotriose, but does not display significant activity against linear non-substituted arabinan. It is also highly efficient in the cleavage of alpha-(1-&gt;3)-linked arabinoside of xylobiose and of the alpha-(1-&gt;3)-linked arabinoside decorations of polymeric wheat arabinoxylan. It exhibits very low activity against sugar beet arabinan. The polypeptide is Intracellular exo-alpha-(1-&gt;5)-L-arabinofuranosidase (Acetivibrio thermocellus (strain ATCC 27405 / DSM 1237 / JCM 9322 / NBRC 103400 / NCIMB 10682 / NRRL B-4536 / VPI 7372) (Clostridium thermocellum)).